The primary structure comprises 327 residues: L-serine dehydratase/L-threonine deaminase (327 aa).

Alanine 2 carries the post-translational modification N-acetylalanine. Lysine 41 is subject to N6-(pyridoxal phosphate)lysine. Proline 128 contacts pyridoxal 5'-phosphate.

It belongs to the serine/threonine dehydratase family. In terms of assembly, homodimer. Requires pyridoxal 5'-phosphate as cofactor.

The protein resides in the cytoplasm. The catalysed reaction is L-serine = pyruvate + NH4(+). It carries out the reaction L-threonine = 2-oxobutanoate + NH4(+). The protein operates within carbohydrate biosynthesis; gluconeogenesis. Catalyzes the pyridoxal-phosphate-dependent dehydrative deamination of L-threonine and L-serine to ammonia and alpha-ketobutyrate and pyruvate, respectively. This Mus musculus (Mouse) protein is L-serine dehydratase/L-threonine deaminase (Sds).